A 350-amino-acid chain; its full sequence is Izumo sperm-egg fusion protein 1 (350 aa).

The N-terminal stretch at 1 to 21 (MGPHFTLLCAALAGCLLPAEG) is a signal peptide. 5 cysteine pairs are disulfide-bonded: C22-C149, C25-C152, C135-C159, C139-C165, and C182-C233. Residues 22–292 (CVICDPSVVL…LQPEKMLASR (271 aa)) lie on the Extracellular side of the membrane. Residues 148-160 (WCKNCKKEVHACR) form an important for interaction with IZUMO1R region. Residues 167–251 (ERNVEVPQME…PATIINFHVT (85 aa)) enclose the Ig-like C2-type domain. Residue N204 is glycosylated (N-linked (GlcNAc...) asparagine). A helical membrane pass occupies residues 293 to 313 (LLGLLICGSLALITGLTFAIF). Residues 314–350 (RRRKVIDFIKSSLFGLGSGAAEQTQVPKEKATDSRQQ) are Cytoplasmic-facing. At S325 the chain carries Phosphoserine.

This sequence belongs to the Izumo family. Monomer, homodimer; disulfide-linked and homooligomer; depending on the context. Interacts with IZUMO1R/JUNO. IZUMO1 and IZUMO1R/JUNO form a complex with 1:1 stoichiometry. In gamete recognition, IZUMO1R/JUNO first binds to monomeric IZUMO1. The weak, but specific interaction with IZUMO1R/JUNO induces IZUMO1 homodimerization. The process follows a tight binding phase where IZUMO1 bends the entire structure towards the sperm membrane side through a thiol-disulfide exchange reaction. The molecule no longer binds to IZUMO1R/JUNO and instead binds to a putative second oocyte receptor. Interacts with ACE3. Part of a oolemmal binding multimeric complex (IZUMO1 complex) composed at least of IZUMO1 and GLIPR1L1; the complex assemblage is influenced by the maturation status of the male germ cell. Interacts with GLIPR1L1. Interacts with FREY; the interaction retains IZUMO1 at the endoplasmic reticulum membrane and coordinates IZUMO1 complex assembly. Interacts with FCRL3/MAIA (via extracellular domain); the interaction replaces IZUMO1R/JUNO as IZUMO1 receptor after sperm-egg adhesion. Interacts with WDR54. Forms a complex with SPACA6 and TMEM81 on spermatocyte cell membrane. Post-translationally, N-glycosylated. Glycosylation is not essential for fusion and for proper protein trafficking in sperm. In terms of processing, phosphorylated. The cytoplasmic C-terminus is phosphorylated and undergoes phosphorylation changes during epididymal transit. As to expression, sperm-specific (at protein level). Detectable on sperm surface only after the acrosome reaction.

It localises to the cell membrane. Its subcellular location is the cytoplasmic vesicle. The protein localises to the secretory vesicle. It is found in the acrosome membrane. Its function is as follows. Essential sperm cell-surface protein required for fertilization by acting as a ligand for IZUMO1R/JUNO receptor on egg. The IZUMO1:IZUMO1R/JUNO interaction is a necessary adhesion event between sperm and egg that is required for fertilization but is not sufficient for cell fusion. The ligand-receptor interaction probably does not act as a membrane 'fusogen'. Acts a ligand for the human-specific oolemma epitope FCRL3/MAIA during fertilization. FCRL3/MAIA replaces IZUMO1R/JUNO as IZUMO1 receptor after sperm-egg adhesion, which permits species-specific gamete fusion. Plays a critical role in sperm-oolemma binding prior to plasma membrane fusion. Can mediate cell-cell fusion in cultured mammalian cells independently of its binding to IZUMO1R/JUNO. The polypeptide is Izumo sperm-egg fusion protein 1 (Homo sapiens (Human)).